We begin with the raw amino-acid sequence, 691 residues long: MARTQAEPPASQPDARAAWLRDQLERANYAYYVLDQPDLPDAEYDRLFGELQQLEADHPELVTPDSPTQRVGGAVASGFTPVVHDAPMLSLNNGFSDDDIVAFDKRVADALDKPTDLAGSVTDPVEYACELKFDGLAISLRYERGVFVQASTRGDGTTGEDVTENVRTIRSIPLKLKGAHVPALLDVRGEVLMFKRDFARLNERQRAAEQREFANPRNAAAGSLRQLDPKITAQRPLSFFSYGIGVLDGMPMPDTHSALLDWYEALGLPVNRERAVVRGAQGLLEFFRKVGERRESLPYDIDGVVYKVNRRDEQDRLGFVSRAPRFALAHKFPAQEALTKLVAIDVQVGRTGAITPVARLEPVFVGGATVTNATLHNEDEVRRKDIRIGDTVIVRRAGDVIPEVVGALLERRPVDAAEFVMPTECPVCGSKIERLPDEAIARCTGGLFCPAQRKQALWHFAQRRALDIDGLGEKIIDQLVELNLVRTPADLFNLGFATLAELDRFAEKSAQNLLDSLEKAKHTTLARFIYGLGIRHVGESTAKDLAKHFGSLDPIMDASIEELLEVNDVGPIVAESIHQFFAEEHNRTVIDQLRAPGKVTWPEGPPAPKAPQGVLAGKTVVLTGTLPTLTRDAAKEMLEAAGAKVAGSVSKKTDYVVAGAEAGSKLAKAEELGIPVLDEDGLHQLLEGNTQ.

Residues 41–45 (DAEYD), 90–91 (SL), and Glu-130 contribute to the NAD(+) site. Lys-132 serves as the catalytic N6-AMP-lysine intermediate. Positions 153, 190, 307, and 331 each coordinate NAD(+). Positions 425, 428, 443, and 449 each coordinate Zn(2+). The region spanning 610–691 (APQGVLAGKT…LHQLLEGNTQ (82 aa)) is the BRCT domain.

Belongs to the NAD-dependent DNA ligase family. LigA subfamily. Requires Mg(2+) as cofactor. Mn(2+) is required as a cofactor.

It catalyses the reaction NAD(+) + (deoxyribonucleotide)n-3'-hydroxyl + 5'-phospho-(deoxyribonucleotide)m = (deoxyribonucleotide)n+m + AMP + beta-nicotinamide D-nucleotide.. DNA ligase that catalyzes the formation of phosphodiester linkages between 5'-phosphoryl and 3'-hydroxyl groups in double-stranded DNA using NAD as a coenzyme and as the energy source for the reaction. It is essential for DNA replication and repair of damaged DNA. The chain is DNA ligase from Burkholderia vietnamiensis (strain G4 / LMG 22486) (Burkholderia cepacia (strain R1808)).